Reading from the N-terminus, the 1024-residue chain is Beta-galactosidase (1024 aa).

Residues Asn103 and Asp202 each coordinate substrate. Position 202 (Asp202) interacts with Na(+). The Mg(2+) site is built by Glu417, His419, and Glu462. Substrate-binding positions include Glu462 and 538–541; that span reads EYAH. The Proton donor role is filled by Glu462. Residue Glu538 is the Nucleophile of the active site. Asn598 contributes to the Mg(2+) binding site. Na(+) contacts are provided by Phe602 and Asn605. Substrate is bound by residues Asn605 and Trp1000.

Belongs to the glycosyl hydrolase 2 family. Homotetramer. Mg(2+) is required as a cofactor. It depends on Na(+) as a cofactor.

It carries out the reaction Hydrolysis of terminal non-reducing beta-D-galactose residues in beta-D-galactosides.. This is Beta-galactosidase from Escherichia coli (strain UTI89 / UPEC).